The primary structure comprises 1159 residues: Anillin-like protein 1 (1159 aa).

Disordered regions lie at residues 43 to 81 (VASP…MKEN), 266 to 327 (QQVS…TKTT), 409 to 430 (KLKK…APVP), 549 to 608 (AIPK…GDVI), and 629 to 699 (FGFM…KSSS). Polar residues predominate over residues 50-60 (FGSSSKCNDGP). Over residues 287–327 (ASSATSSSSSTTTLTTISGASGSTTSGISNAPQDSASTKTT) the composition is skewed to low complexity. Positions 421–430 (PPAPTSAPVP) are enriched in pro residues. Residues 564-584 (SASSLYSQGARSNTASPASKS) are compositionally biased toward polar residues. Acidic residues predominate over residues 660-684 (VIEEETENEDESEPYEPEEEEDDDA). In terms of domain architecture, PH spans 1029 to 1147 (DITYHGFLSM…WLSLINSTSK (119 aa)).

In terms of tissue distribution, strongly expressed in dividing neuroblasts under the ventral epidermal cells during ventral enclosure.

It localises to the cytoplasm. It is found in the cell cortex. Its subcellular location is the cytoskeleton. The protein localises to the spindle. The protein resides in the midbody. It localises to the cleavage furrow. Its function is as follows. Required for contractile events in embryos that occur prior to mitosis, such as cortical ruffling and pseudocleavage. Promotes membrane ruffling by organizing cortical patches of septins and myosin II. Not generally required for cytokinesis in mitotic cells. Required for the asymmetric cleavage events that extrude the two polar bodies during oocyte meiosis. Not required for meiotic contractile ring assembly, initiation or closure but is required for the transformation of the contractile ring from a disk above the spindle to a tube around the spindle midzone. Promotes astral microtubule-directed cortical myosin polarization and cleavage furrow ingression. Regulates neuroblast cytokinesis during mid- to late-embryogenesis and is required for ventral enclosure. This is Anillin-like protein 1 (ani-1) from Caenorhabditis elegans.